The chain runs to 23 residues: Caerin-4.2 (23 aa).

As to expression, expressed by the skin parotoid and/or rostral glands.

It is found in the secreted. Functionally, antibacterial peptide, that adopts an alpha helical conformation which can disrupt bacterial membranes. Each caerin displays a different antimicrobial specificity. This is Caerin-4.2 from Ranoidea caerulea (Green tree frog).